Reading from the N-terminus, the 275-residue chain is 2,3,4,5-tetrahydropyridine-2,6-dicarboxylate N-succinyltransferase (275 aa).

Positions 106 and 143 each coordinate substrate.

Belongs to the transferase hexapeptide repeat family. Homotrimer.

It localises to the cytoplasm. It carries out the reaction (S)-2,3,4,5-tetrahydrodipicolinate + succinyl-CoA + H2O = (S)-2-succinylamino-6-oxoheptanedioate + CoA. Its pathway is amino-acid biosynthesis; L-lysine biosynthesis via DAP pathway; LL-2,6-diaminopimelate from (S)-tetrahydrodipicolinate (succinylase route): step 1/3. The polypeptide is 2,3,4,5-tetrahydropyridine-2,6-dicarboxylate N-succinyltransferase (Ralstonia nicotianae (strain ATCC BAA-1114 / GMI1000) (Ralstonia solanacearum)).